A 518-amino-acid chain; its full sequence is Membrane-bound lytic murein transglycosylase F (518 aa).

Residues 1–21 (MKKLKINYLFIGILALLLAVA) form the signal peptide. The non-LT domain stretch occupies residues 22–269 (LWPSIPWFGK…RIEEKYLGHG (248 aa)). The LT domain stretch occupies residues 270-518 (DDFDYVDTRT…SRKGSEEKQN (249 aa)). Glu314 is a catalytic residue.

This sequence in the N-terminal section; belongs to the bacterial solute-binding protein 3 family. It in the C-terminal section; belongs to the transglycosylase Slt family.

It is found in the cell outer membrane. The enzyme catalyses Exolytic cleavage of the (1-&gt;4)-beta-glycosidic linkage between N-acetylmuramic acid (MurNAc) and N-acetylglucosamine (GlcNAc) residues in peptidoglycan, from either the reducing or the non-reducing ends of the peptidoglycan chains, with concomitant formation of a 1,6-anhydrobond in the MurNAc residue.. In terms of biological role, murein-degrading enzyme that degrades murein glycan strands and insoluble, high-molecular weight murein sacculi, with the concomitant formation of a 1,6-anhydromuramoyl product. Lytic transglycosylases (LTs) play an integral role in the metabolism of the peptidoglycan (PG) sacculus. Their lytic action creates space within the PG sacculus to allow for its expansion as well as for the insertion of various structures such as secretion systems and flagella. This Escherichia coli O6:K15:H31 (strain 536 / UPEC) protein is Membrane-bound lytic murein transglycosylase F.